The sequence spans 389 residues: Leucine aminopeptidase 1 (389 aa).

Positions 1–19 (MKLPALLTLGVAASTMVLA) are cleaved as a signal peptide. A propeptide spanning residues 20–88 (AIAPDQVPLN…LPKVFPTPAV (69 aa)) is cleaved from the precursor. N-linked (GlcNAc...) asparagine glycans are attached at residues Asn96, Asn119, Asn149, Asn164, and Asn181. Residues His189 and Asp208 each coordinate Zn(2+). A glycan (N-linked (GlcNAc...) asparagine) is linked at Asn233. Residues Glu247 and Asp274 each contribute to the Zn(2+) site. Cys323 and Cys327 are disulfide-bonded. His356 serves as a coordination point for Zn(2+).

This sequence belongs to the peptidase M28 family. M28E subfamily. In terms of assembly, monomer. Requires Zn(2+) as cofactor.

The protein resides in the secreted. Extracellular aminopeptidase that allows assimilation of proteinaceous substrates. In Paracoccidioides brasiliensis (strain Pb18), this protein is Leucine aminopeptidase 1 (LAP1).